The primary structure comprises 1470 residues: Calmodulin-regulated spectrin-associated protein 2 (1470 aa).

In terms of domain architecture, Calponin-homology (CH) spans 222–335 (WKLVPARYRK…FMAELFWWFE (114 aa)). A disordered region spans residues 374–397 (SSSSSDFTSRYTRPQTHSSVSGGI). Over residues 380–390 (FTSRYTRPQTH) the composition is skewed to polar residues. Residues Ser402 and Ser404 each carry the phosphoserine modification. Thr412 carries the post-translational modification Phosphothreonine. 5 positions are modified to phosphoserine: Ser450, Ser581, Ser582, Ser594, and Ser656. Disordered regions lie at residues 580 to 622 (QSSP…EDSS) and 648 to 712 (ASNP…EGSE). At Thr661 the chain carries Phosphothreonine. Position 663 is a phosphoserine (Ser663). Residues 663–682 (STKSQPGSSASSSSGVKMTS) are compositionally biased toward low complexity. The segment covering 686–696 (QKFRKLNHTDG) has biased composition (basic and acidic residues). Residues 739–776 (LLASEMVHLRMRLEEKRRAIEAQKKKMEAAFTKQRQKM) are a coiled coil. Over residues 796–835 (REEAAGAEDEKVYTDRAKEKESQKMDGQRSKSLADIKESM) the composition is skewed to basic and acidic residues. A disordered region spans residues 796–864 (REEAAGAEDE…QWNLTSPSEE (69 aa)). Position 845 is a phosphoserine (Ser845). The stretch at 870-909 (ELLEYTKSIEKLNSSLHFLQQEMQRLSLQQEMLMQMREQQ) forms a coiled coil. The interval 905–1016 (MREQQSWVIS…IQTRSFVCFG (112 aa)) is MBD region. Ser914 and Ser919 each carry phosphoserine. 2 disordered regions span residues 930-1059 (RQAG…PLES) and 1078-1099 (NEDQLNQPTDPPPKPVFPPTAP). A compositionally biased stretch (low complexity) spans 935–946 (SSAAAPFSADSP). Over residues 952–971 (SPQSSTRKSASFSVKNQRTP) the composition is skewed to polar residues. A phosphothreonine mark is found at Thr979, Thr984, and Thr986. Phosphoserine occurs at positions 990 and 1001. Over residues 1001–1011 (SPSQVPIQTRS) the composition is skewed to polar residues. 2 stretches are compositionally biased toward basic and acidic residues: residues 1020 to 1037 (EPQKEPKPKEEIKKEPSE) and 1044 to 1056 (SCDHNPGEKEVKP). Residues 1086-1098 (TDPPPKPVFPPTA) are compositionally biased toward pro residues. The residue at position 1129 (Ser1129) is a Phosphoserine. Residues 1147 to 1219 (KDDQKAENDM…REFIRQEYMR (73 aa)) adopt a coiled-coil conformation. Over residues 1167–1233 (RLRREKETQL…KLMEDMDTVI (67 aa)) the composition is skewed to basic and acidic residues. A disordered region spans residues 1167 to 1327 (RLRREKETQL…TTSSVASGTE (161 aa)). Positions 1268-1280 (SSLSLASLNTGDT) are enriched in polar residues. Residues Ser1294, Ser1300, and Ser1302 each carry the phosphoserine modification. Residues 1315–1327 (NASTTSSVASGTE) are compositionally biased toward polar residues. Residues 1330–1464 (GPKLYKEPSA…QTKRPVTPKK (135 aa)) enclose the CKK domain.

The protein belongs to the CAMSAP1 family. Interacts with CAMSAP3. Interacts with KATNA1 and KATNB1; leading to regulate the length of CAMSAP2-decorated microtubule stretches. Interacts with a complex formed by AKAP9 and PDE4DIP; this interaction, which is PDE4DIP isoform-specific, recruits CAMSAP2 to the Golgi. Interacts with MAPRE1/EB1. Present in the soma, axon, and dendritic shaft of hippocampal neurons (at protein level).

Its subcellular location is the cytoplasm. It localises to the cytoskeleton. It is found in the golgi apparatus. The protein resides in the cilium basal body. Key microtubule-organizing protein that specifically binds the minus-end of non-centrosomal microtubules and regulates their dynamics and organization. Specifically recognizes growing microtubule minus-ends and autonomously decorates and stabilizes microtubule lattice formed by microtubule minus-end polymerization. Acts on free microtubule minus-ends that are not capped by microtubule-nucleating proteins or other factors and protects microtubule minus-ends from depolymerization. In addition, it also reduces the velocity of microtubule polymerization. Through the microtubule cytoskeleton, also regulates the organization of cellular organelles including the Golgi and the early endosomes. Essential for the tethering, but not for nucleation of non-centrosomal microtubules at the Golgi: together with Golgi-associated proteins AKAP9 and PDE4DIP, required to tether non-centrosomal minus-end microtubules to the Golgi, an important step for polarized cell movement. Also acts as a regulator of neuronal polarity and development: localizes to non-centrosomal microtubule minus-ends in neurons and stabilizes non-centrosomal microtubules, which is required for neuronal polarity, axon specification and dendritic branch formation. Through the microtubule cytoskeleton, regulates the autophagosome transport. This Rattus norvegicus (Rat) protein is Calmodulin-regulated spectrin-associated protein 2.